The chain runs to 271 residues: MNGHCLFAASPPRLFPLRSISSSVSPSGSYRIKFSDNVAVECRNLCFSVSTRQGISVPILRDCSFRIPSGQLWMILGPNGCGKSTLLKILAGVVNPSSGTVFVEKPKNFVFQNPDHQVVMPTVEADVAFGLGKYHDMNQEEVKSRVIKALEAVGMRDYMQRPIQTLSGGQKQRIAIAGALAEACKVLLLDELTTFLDESDQMGVIKAVKDLINAKKGDVTALWVTHRLEELKYADGAVYMENGRVVRHGDAATISDFIKAKQSSYIDQIGS.

The region spanning 40–267 (VECRNLCFSV…IKAKQSSYID (228 aa)) is the ABC transporter domain. Residue 77–84 (GPNGCGKS) participates in ATP binding.

This sequence belongs to the ABC transporter superfamily. ABCI family.

The sequence is that of ABC transporter I family member 10 (ABCI10) from Arabidopsis thaliana (Mouse-ear cress).